Consider the following 460-residue polypeptide: Bifunctional protein GlmU (460 aa).

The interval 1-229 (MTNYAIILAA…FNESLGVNDR (229 aa)) is pyrophosphorylase. Residues 8–11 (LAAG), Lys22, Gln72, and 77–78 (GT) contribute to the UDP-N-acetyl-alpha-D-glucosamine site. Asp102 serves as a coordination point for Mg(2+). Positions 139, 154, 169, and 227 each coordinate UDP-N-acetyl-alpha-D-glucosamine. Asn227 contacts Mg(2+). The interval 230 to 250 (VALATAETVMRQRITQKHMVN) is linker. The segment at 251–460 (GVTFHNPETV…RLAHHPSRSK (210 aa)) is N-acetyltransferase. UDP-N-acetyl-alpha-D-glucosamine contacts are provided by Arg332 and Lys350. The active-site Proton acceptor is His362. 2 residues coordinate UDP-N-acetyl-alpha-D-glucosamine: Tyr365 and Asn376. Residues Ala379, 385–386 (NY), Ser404, Ala422, and Arg439 contribute to the acetyl-CoA site.

It in the N-terminal section; belongs to the N-acetylglucosamine-1-phosphate uridyltransferase family. The protein in the C-terminal section; belongs to the transferase hexapeptide repeat family. Homotrimer. The cofactor is Mg(2+).

The protein localises to the cytoplasm. The enzyme catalyses alpha-D-glucosamine 1-phosphate + acetyl-CoA = N-acetyl-alpha-D-glucosamine 1-phosphate + CoA + H(+). The catalysed reaction is N-acetyl-alpha-D-glucosamine 1-phosphate + UTP + H(+) = UDP-N-acetyl-alpha-D-glucosamine + diphosphate. The protein operates within nucleotide-sugar biosynthesis; UDP-N-acetyl-alpha-D-glucosamine biosynthesis; N-acetyl-alpha-D-glucosamine 1-phosphate from alpha-D-glucosamine 6-phosphate (route II): step 2/2. It participates in nucleotide-sugar biosynthesis; UDP-N-acetyl-alpha-D-glucosamine biosynthesis; UDP-N-acetyl-alpha-D-glucosamine from N-acetyl-alpha-D-glucosamine 1-phosphate: step 1/1. It functions in the pathway bacterial outer membrane biogenesis; LPS lipid A biosynthesis. Its function is as follows. Catalyzes the last two sequential reactions in the de novo biosynthetic pathway for UDP-N-acetylglucosamine (UDP-GlcNAc). The C-terminal domain catalyzes the transfer of acetyl group from acetyl coenzyme A to glucosamine-1-phosphate (GlcN-1-P) to produce N-acetylglucosamine-1-phosphate (GlcNAc-1-P), which is converted into UDP-GlcNAc by the transfer of uridine 5-monophosphate (from uridine 5-triphosphate), a reaction catalyzed by the N-terminal domain. This is Bifunctional protein GlmU from Streptococcus pyogenes serotype M49 (strain NZ131).